Reading from the N-terminus, the 85-residue chain is ATP synthase epsilon chain (85 aa).

The protein belongs to the ATPase epsilon chain family. In terms of assembly, F-type ATPases have 2 components, CF(1) - the catalytic core - and CF(0) - the membrane proton channel. CF(1) has five subunits: alpha(3), beta(3), gamma(1), delta(1), epsilon(1). CF(0) has three main subunits: a, b and c.

The protein localises to the cell membrane. Produces ATP from ADP in the presence of a proton gradient across the membrane. This chain is ATP synthase epsilon chain, found in Frankia casuarinae (strain DSM 45818 / CECT 9043 / HFP020203 / CcI3).